The following is a 190-amino-acid chain: Dynein axonemal light chain 1 (190 aa).

Alanine 2 is subject to N-acetylalanine. LRR repeat units follow at residues 49-70 (NCEK…NGLK), 71-92 (NLRI…EAVG), 94-115 (TLEE…HVMK), and 116-137 (KLKI…VKLA). Serine 56 bears the Phosphoserine mark. The LRRCT domain maps to 150 to 190 (NPLEEKHSAEGNWVEEATKRVPKLKKLDGTPVIKEDEEEDN).

The protein belongs to the dynein light chain LC1-type family. In terms of assembly, interacts with ZMYND10 (via C-terminus). Interacts with DNAH5, a outer arm dynein heavy chain. Interacts with tubulin located within the A-tubule of the outer doublets in a ATP-independent manner.

The protein resides in the cytoplasm. Its subcellular location is the cytoskeleton. It localises to the cilium axoneme. Functionally, part of the multisubunit axonemal ATPase complexes that generate the force for cilia motility and govern beat frequency. Component of the outer arm dynein (ODA). May be involved in a mechanosensory feedback mechanism controlling ODA activity based on external conformational cues by tethering the outer arm dynein heavy chain (DNAH5) to the microtubule within the axoneme. Important for ciliary function in the airways and for the function of the cilia that produce the nodal flow essential for the determination of the left-right asymmetry. This is Dynein axonemal light chain 1 (DNAL1) from Bos taurus (Bovine).